Here is a 331-residue protein sequence, read N- to C-terminus: MTTPDAFRDAEYIADVSGISYGNVANLTEQDANVVPRENERMRKLQLAAKVAFIDRLLRDLDILIYCELSALYYMDCSVILFAIRAIVQLIFFTPKAPPFDPTRNQPFIGAIFVSNIFCMIFHNFFTHPEASEATRGYLHGGLLIDFIGQKAPIPLFRLFLLDFLVLILDLVMLGLIVERVKTTGQTSTTSTEILRVQDHDSEERGVHRTRPESRSSVVGAELDETDGHITRANAGVGEQAEHTQLLADPSEDGHTPGAKNSHPLDAFSSGEAVIMNLGLFDVIRDQWKYSTTAPPARTSSYIPSDQTAAFLRARFGLQVGPDGRVQRIQS.

The N-linked (GlcNAc...) asparagine glycan is linked to asparagine 26. 3 helical membrane passes run 63 to 83 (ILIY…ILFA), 107 to 127 (PFIG…NFFT), and 159 to 179 (LFLL…LIVE). Residues 197–214 (VQDHDSEERGVHRTRPES) show a composition bias toward basic and acidic residues. The disordered stretch occupies residues 197 to 225 (VQDHDSEERGVHRTRPESRSSVVGAELDE).

As to quaternary structure, component of the DSC E3 ubiquitin ligase complex composed of dscA, dscB, dscC and dscD.

It localises to the endoplasmic reticulum membrane. It functions in the pathway protein modification; protein ubiquitination. Component of the DSC E3 ubiquitin ligase complex which is required for the srbA transcriptional activator proteolytic cleavage to release the soluble transcription factor from the membrane in low oxygen or sterol conditions. Required for growth during hypoxia and triazole drug susceptibility, as well as for virulence in a murine model of invasive pulmonary aspergillosis (IPA). The polypeptide is DSC E3 ubiquitin ligase complex subunit D (Aspergillus fumigatus (strain CBS 144.89 / FGSC A1163 / CEA10) (Neosartorya fumigata)).